A 220-amino-acid polypeptide reads, in one-letter code: Probable metallo-hydrolase YybB (220 aa).

Residues His67, His69, Asp71, His72, His139, Asp158, and His200 each contribute to the Zn(2+) site.

It belongs to the metallo-beta-lactamase superfamily. Zn(2+) is required as a cofactor.

In Bacillus subtilis (strain 168), this protein is Probable metallo-hydrolase YybB (yybB).